The sequence spans 776 residues: ADP-ribosylation factor GTPase-activating protein AGD2 (776 aa).

The BAR domain maps to 2–226 (AGFINLEDSP…IHQVLTYAQQ (225 aa)). The tract at residues 248–267 (QSELDSQQASAKADPSDVGG) is disordered. Positions 290-421 (EVTKQGYLLK…WVNKITAAIT (132 aa)) constitute a PH domain. The Arf-GAP domain maps to 467-604 (DDVLTILREI…ALVVKDEREA (138 aa)). The C4-type zinc finger occupies 482–505 (CAECNAPDPDWASLNLGVLMCIEC). ANK repeat units follow at residues 683-712 (QGCSLLHVACQSGDPILLELLLQFGADINM) and 716-745 (HGRTPLHHCIASGNNAFAKVLLRRGARPSI).

In terms of tissue distribution, expressed in roots, hypocotyls, cotyledons, leaf and shoot apical meristems and siliques.

Probable GTPase-activating protein. The polypeptide is ADP-ribosylation factor GTPase-activating protein AGD2 (AGD2) (Arabidopsis thaliana (Mouse-ear cress)).